Consider the following 559-residue polypeptide: DnaJ homolog subfamily C member 11 (559 aa).

A2 is modified (N-acetylalanine). Residues 14–82 (DYYSLLNVRR…QTRAIYDIYG (69 aa)) form the J domain. A Phosphoserine modification is found at S204. Residues 415-457 (QKEKELEKQRENTASDILQKKQEAEAAVRLMQESVRRIIEAEE) are a coiled coil.

This sequence belongs to the DNAJC11 family. Associates with the mitochondrial contact site and cristae organizing system (MICOS) complex, composed of at least MICOS10/MIC10, CHCHD3/MIC19, CHCHD6/MIC25, APOOL/MIC27, IMMT/MIC60, APOO/MIC23/MIC26 and QIL1/MIC13. This complex was also known under the names MINOS or MitOS complex. The MICOS complex associates with mitochondrial outer membrane proteins SAMM50, MTX1 and MTX2 (together described as components of the mitochondrial outer membrane sorting assembly machinery (SAM) complex) and DNAJC11, mitochondrial inner membrane protein TMEM11 and with HSPA9. The MICOS and SAM complexes together with DNAJC11 are part of a large protein complex spanning both membranes termed the mitochondrial intermembrane space bridging (MIB) complex.

The protein localises to the mitochondrion. It localises to the mitochondrion outer membrane. Required for mitochondrial inner membrane organization. Seems to function through its association with the MICOS complex and the mitochondrial outer membrane sorting assembly machinery (SAM) complex. The polypeptide is DnaJ homolog subfamily C member 11 (Dnajc11) (Mus musculus (Mouse)).